A 488-amino-acid polypeptide reads, in one-letter code: Glutamyl-tRNA(Gln) amidotransferase subunit A (488 aa).

Residues Lys77 and Ser152 each act as charge relay system in the active site. Ser176 (acyl-ester intermediate) is an active-site residue.

Belongs to the amidase family. GatA subfamily. Heterotrimer of A, B and C subunits.

It catalyses the reaction L-glutamyl-tRNA(Gln) + L-glutamine + ATP + H2O = L-glutaminyl-tRNA(Gln) + L-glutamate + ADP + phosphate + H(+). Its function is as follows. Allows the formation of correctly charged Gln-tRNA(Gln) through the transamidation of misacylated Glu-tRNA(Gln) in organisms which lack glutaminyl-tRNA synthetase. The reaction takes place in the presence of glutamine and ATP through an activated gamma-phospho-Glu-tRNA(Gln). The sequence is that of Glutamyl-tRNA(Gln) amidotransferase subunit A from Streptococcus pneumoniae (strain Hungary19A-6).